Here is a 462-residue protein sequence, read N- to C-terminus: L-seryl-tRNA(Sec) selenium transferase (462 aa).

K292 bears the N6-(pyridoxal phosphate)lysine mark.

Belongs to the SelA family. The cofactor is pyridoxal 5'-phosphate.

It localises to the cytoplasm. The catalysed reaction is L-seryl-tRNA(Sec) + selenophosphate + H(+) = L-selenocysteinyl-tRNA(Sec) + phosphate. It participates in aminoacyl-tRNA biosynthesis; selenocysteinyl-tRNA(Sec) biosynthesis; selenocysteinyl-tRNA(Sec) from L-seryl-tRNA(Sec) (bacterial route): step 1/1. Functionally, converts seryl-tRNA(Sec) to selenocysteinyl-tRNA(Sec) required for selenoprotein biosynthesis. The chain is L-seryl-tRNA(Sec) selenium transferase from Clostridium perfringens (strain 13 / Type A).